Consider the following 146-residue polypeptide: Deoxyuridine 5'-triphosphate nucleotidohydrolase (146 aa).

Substrate contacts are provided by residues 66 to 68 (RSG), Asn-79, and 83 to 85 (TID).

Belongs to the dUTPase family. The cofactor is Mg(2+).

The enzyme catalyses dUTP + H2O = dUMP + diphosphate + H(+). It functions in the pathway pyrimidine metabolism; dUMP biosynthesis; dUMP from dCTP (dUTP route): step 2/2. Functionally, this enzyme is involved in nucleotide metabolism: it produces dUMP, the immediate precursor of thymidine nucleotides and it decreases the intracellular concentration of dUTP so that uracil cannot be incorporated into DNA. This chain is Deoxyuridine 5'-triphosphate nucleotidohydrolase, found in Citrifermentans bemidjiense (strain ATCC BAA-1014 / DSM 16622 / JCM 12645 / Bem) (Geobacter bemidjiensis).